The primary structure comprises 212 residues: Peptide methionine sulfoxide reductase MsrA (212 aa).

The active site involves Cys-52.

Belongs to the MsrA Met sulfoxide reductase family.

It catalyses the reaction L-methionyl-[protein] + [thioredoxin]-disulfide + H2O = L-methionyl-(S)-S-oxide-[protein] + [thioredoxin]-dithiol. The enzyme catalyses [thioredoxin]-disulfide + L-methionine + H2O = L-methionine (S)-S-oxide + [thioredoxin]-dithiol. Functionally, has an important function as a repair enzyme for proteins that have been inactivated by oxidation. Catalyzes the reversible oxidation-reduction of methionine sulfoxide in proteins to methionine. This chain is Peptide methionine sulfoxide reductase MsrA, found in Salmonella choleraesuis (strain SC-B67).